The primary structure comprises 33 residues: Non-specific lipid-transfer protein (33 aa).

A disulfide bridge connects residues cysteine 14 and cysteine 29.

Belongs to the plant LTP family. Dimer.

In terms of biological role, plant non-specific lipid-transfer proteins transfer phospholipids as well as galactolipids across membranes. May play a role in wax or cutin deposition in the cell walls of expanding epidermal cells and certain secretory tissues. Has antibacterial activity against Gram-positive bacteria S.aureus and S.epidermidis and blocks biofilm formation. In a mouse model, also protects against bacterial sepsis and has an anti-inflammatory effect. Exhibits antinociceptive activity upon oral or intraperitoneal application in mice. In Morinda citrifolia (Indian mulberry), this protein is Non-specific lipid-transfer protein.